The primary structure comprises 350 residues: GTPase Obg (350 aa).

The 175-residue stretch at M1 to I175 folds into the Obg domain. Residues A176–G345 form the OBG-type G domain. GTP contacts are provided by residues G182–S189, F207–Q211, D229–G232, N299–D302, and S326–L328. S189 and T209 together coordinate Mg(2+).

Belongs to the TRAFAC class OBG-HflX-like GTPase superfamily. OBG GTPase family. In terms of assembly, monomer. It depends on Mg(2+) as a cofactor.

It localises to the cytoplasm. An essential GTPase which binds GTP, GDP and possibly (p)ppGpp with moderate affinity, with high nucleotide exchange rates and a fairly low GTP hydrolysis rate. Plays a role in control of the cell cycle, stress response, ribosome biogenesis and in those bacteria that undergo differentiation, in morphogenesis control. This is GTPase Obg from Akkermansia muciniphila (strain ATCC BAA-835 / DSM 22959 / JCM 33894 / BCRC 81048 / CCUG 64013 / CIP 107961 / Muc).